The following is a 183-amino-acid chain: Adenine phosphoribosyltransferase (183 aa).

The protein belongs to the purine/pyrimidine phosphoribosyltransferase family. Homodimer.

It is found in the cytoplasm. It carries out the reaction AMP + diphosphate = 5-phospho-alpha-D-ribose 1-diphosphate + adenine. The protein operates within purine metabolism; AMP biosynthesis via salvage pathway; AMP from adenine: step 1/1. Functionally, catalyzes a salvage reaction resulting in the formation of AMP, that is energically less costly than de novo synthesis. This is Adenine phosphoribosyltransferase from Citrobacter koseri (strain ATCC BAA-895 / CDC 4225-83 / SGSC4696).